Here is a 646-residue protein sequence, read N- to C-terminus: MASGGAFCLIANDGKADKIILAQDLLNSRISNIKNVNKSYGKPDPEPTLSQIEETHMVHFNAHFKPYVPIGFEYNKVRPHTGTPTLGNKLTFGIPQYGDFFHDMVGHHILGACHSSWQDAPIQGSSQMGAHGQLQTFPRNGYDWDNQTPLEGAVYTLVDPFGRPIVPGTKNAYRNLVYYCEYPGERLYENVRFDVNGNSLDEYSSDVTTLVRKFCIPGDKMTGYKHLVGQEVSVEGTSGPLLCNVQDMHKPHQSKPILTDENDTQRTCTHTNPKFLSQHFPENSHNIQTAGKQDITPITDATYLDIRRNVHYSCNGPQTPKYYQPPLALWIKLRFWFNENVNLAIPSVSIPFGERFITIKLASQKDLVNEFPGLFIRQSRFIPGRPSRRNIRFKPWFIPGVISEISLTNNELYINNLFVTPEIHNLFVKRVRFSLIRVHKTQVTHTNNNHHDEKLMSALKWPIEYMFIGLKPTWNISDQNPHQHRDWHKFGHVVNAIMQPTHHAEVSFQDRDTALPDACSSISDISPITYPITLPIIKNISVTAHGINLIDKFPSKFCSSYIPFHYGGNSIKTPDDPGAMMITFALKPREEYQPSGHINVSRAREFYISWDTDYVGSITTADLVVSASAINFLLLQNGSAVLRYST.

Belongs to the NCLDV major capsid protein family. In terms of assembly, homotrimer. The membrane-bound form, but not the cytosolic one, assembles into large complexes. Interacts with the minor capsid proteins M1249L and p17; these interactions form a rigid zipper structure that stabilizes the capsomers.

Its subcellular location is the virion. The protein localises to the host endoplasmic reticulum membrane. It is found in the host cytoplasm. The protein resides in the host cytosol. Capsid protein that self-assembles to form the pseudo-hexameric capsomers of the icosahedral capsid. The capsid is constructed of 2760 pseudo-hexameric capsomers and 12 pentameric capsomers, with a T=277 symmetry, about 200 nm in diameter. The capsid encapsulates the DNA-containing nucleoid, the core shell and the inner membrane. Plays an essential role in virion assembly. Involved in virus attachment to the host cell. In African swine fever virus (isolate Pig/Kenya/KEN-50/1950) (ASFV), this protein is Major capsid protein.